The following is a 381-amino-acid chain: Sulfate adenylyltransferase (381 aa).

This sequence belongs to the sulfate adenylyltransferase family.

It carries out the reaction sulfate + ATP + H(+) = adenosine 5'-phosphosulfate + diphosphate. It functions in the pathway sulfur metabolism; hydrogen sulfide biosynthesis; sulfite from sulfate: step 1/3. The protein is Sulfate adenylyltransferase of Chloroflexus aurantiacus (strain ATCC 29366 / DSM 635 / J-10-fl).